The chain runs to 551 residues: Podocalyxin (551 aa).

Positions 1-21 are cleaved as a signal peptide; the sequence is MRSALALAALLLLLLSPPSLS. Residues 18-324 are disordered; it reads PSLSQEKSPQ…QRVSCGPPER (307 aa). The Extracellular portion of the chain corresponds to 22–452; it reads QEKSPQPGPT…PPEETEDRFS (431 aa). Residues 32–59 are compositionally biased toward low complexity; sequence PMATSTSTRPAPASAPAPKSSVAASVPA. Residues 60–90 are compositionally biased toward polar residues; sequence EQNTTPMTTKAPATQSPSASPGSSVENSAPA. Positions 91-104 are enriched in low complexity; that stretch reads QGSTTTQQSLSVTT. Positions 142-164 are enriched in polar residues; sequence APSNHSITTKPLATEATSQAPRQ. N-linked (GlcNAc...) asparagine glycans are attached at residues Asn145 and Asn180. A compositionally biased stretch (polar residues) spans 234–244; that stretch reads PVASSAETQGM. Residues 289–300 are compositionally biased toward low complexity; the sequence is TSSSTELASTAL. A glycan (N-linked (GlcNAc...) asparagine) is linked at Asn333. A helical membrane pass occupies residues 453 to 473; it reads LPLIITIVCMASFLLLVAALY. Topologically, residues 474–551 are cytoplasmic; it reads GCCHQRLSHR…DLDEEEDTHL (78 aa). Position 511 is a phosphothreonine (Thr511). Ser530 carries the phosphoserine modification. Thr549 carries the phosphothreonine modification.

It belongs to the podocalyxin family. In terms of assembly, monomer; when associated with the membrane raft. Oligomer; when integrated in the apical membrane. Found in a complex with EZR, PODXL and NHERF2. Associates with the actin cytoskeleton through complex formation with EZR and NHERF2. Interacts (via the C-terminal PDZ-binding motif DTHL) with NHERF1 (via the PDZ domains); interaction is not detected in glomerular epithelium cells, take place early in the secretory pathway and is necessary for its apical membrane sorting. Interacts (via the C-terminal PDZ-binding motif DTHL) with NHERF2 (via the PDZ 1 domain); interaction is detected in glomerular epithelium cells. Interacts with EZR. N- and O-linked glycosylated. Sialoglycoprotein. In terms of tissue distribution, glomerular epithelium cell (podocyte) and endothelial cells.

The protein resides in the apical cell membrane. It is found in the cell projection. It localises to the microvillus. Its subcellular location is the membrane raft. The protein localises to the lamellipodium. The protein resides in the filopodium. It is found in the ruffle. It localises to the membrane. Involved in the regulation of both adhesion and cell morphology and cancer progression. Functions as an anti-adhesive molecule that maintains an open filtration pathway between neighboring foot processes in the podocyte by charge repulsion. Acts as a pro-adhesive molecule, enhancing the adherence of cells to immobilized ligands, increasing the rate of migration and cell-cell contacts in an integrin-dependent manner. Induces the formation of apical actin-dependent microvilli. Involved in the formation of a preapical plasma membrane subdomain to set up initial epithelial polarization and the apical lumen formation during renal tubulogenesis. Plays a role in cancer development and aggressiveness by inducing cell migration and invasion through its interaction with the actin-binding protein EZR. Affects EZR-dependent signaling events, leading to increased activities of the MAPK and PI3K pathways in cancer cells. This is Podocalyxin (PODXL) from Oryctolagus cuniculus (Rabbit).